We begin with the raw amino-acid sequence, 403 residues long: MRSTYLFTSESVSEGHPDKVSDQISDAIVDLFIGKDPEARVACETLTTTERVILAGEIRGQGIMDTDGNWAPGIEDEIEAAVRQTVKEIGYEQDGFHWETLTFENHLHGQSAHIAQGVDASGNKDEGAGDQGIMFGFACDETPDLMPAPIDYSHKILHRLATDRKNGNAPFLEPDSKSQVTLRYENGKPVACTAVVVSTQHGAGYDEGEKEAELRAYVKRVVADILPDGFLSDATKWHINPTGTFVIGGPDGDAGLTGRKIIVDTYGGAAPHGGGAFSGKDPTKVDRSAAYITRYLAKNVVAAGLATRCTIQIAYAIGVSQPLSLYVDTHGTGTVDDAAIEEAILDIEKLGGLTPRAIRTHLGLNKPIYRVSAAYGHFGRTAEGDRFPWERTDLVEDLKAALA.

An ATP-binding site is contributed by histidine 16. Mg(2+) is bound at residue aspartate 18. Glutamate 44 provides a ligand contact to K(+). L-methionine is bound by residues glutamate 57 and glutamine 110. The interval 110–120 (QSAHIAQGVDA) is flexible loop. ATP-binding positions include 175–177 (DSK), aspartate 253, 259–260 (RK), alanine 276, and lysine 280. Aspartate 253 contributes to the L-methionine binding site. Lysine 284 provides a ligand contact to L-methionine.

Belongs to the AdoMet synthase family. In terms of assembly, homotetramer; dimer of dimers. Requires Mg(2+) as cofactor. The cofactor is K(+).

The protein resides in the cytoplasm. The catalysed reaction is L-methionine + ATP + H2O = S-adenosyl-L-methionine + phosphate + diphosphate. It participates in amino-acid biosynthesis; S-adenosyl-L-methionine biosynthesis; S-adenosyl-L-methionine from L-methionine: step 1/1. Catalyzes the formation of S-adenosylmethionine (AdoMet) from methionine and ATP. The overall synthetic reaction is composed of two sequential steps, AdoMet formation and the subsequent tripolyphosphate hydrolysis which occurs prior to release of AdoMet from the enzyme. The polypeptide is S-adenosylmethionine synthase (Erythrobacter litoralis (strain HTCC2594)).